We begin with the raw amino-acid sequence, 388 residues long: Deoxyuridine 5'-triphosphate nucleotidohydrolase (388 aa).

Basic and acidic residues predominate over residues 77–88 (EEKYDKEQHPGE). Disordered stretches follow at residues 77–96 (EEKY…SPLP) and 336–388 (THTP…PRHP). Acidic residues predominate over residues 351–363 (VDDDVDETEEDEK).

It belongs to the dUTPase family. Requires Mg(2+) as cofactor.

The catalysed reaction is dUTP + H2O = dUMP + diphosphate + H(+). Its pathway is pyrimidine metabolism; dUMP biosynthesis; dUMP from dCTP (dUTP route): step 2/2. In terms of biological role, involved in nucleotide metabolism: produces dUMP, the immediate precursor of thymidine nucleotides and decreases the intracellular concentration of dUTP to avoid uracil incorporation into viral DNA. The protein is Deoxyuridine 5'-triphosphate nucleotidohydrolase of Homo sapiens (Human).